The following is a 628-amino-acid chain: Probable alpha-L-arabinofuranosidase A (628 aa).

Positions 1–25 are cleaved as a signal peptide; the sequence is MVAFSALSGVSAVSLLLSLVQNAHG. 10 N-linked (GlcNAc...) asparagine glycosylation sites follow: asparagine 36, asparagine 51, asparagine 74, asparagine 152, asparagine 171, asparagine 260, asparagine 359, asparagine 440, asparagine 493, and asparagine 610.

The protein belongs to the glycosyl hydrolase 51 family.

The protein resides in the secreted. The enzyme catalyses Hydrolysis of terminal non-reducing alpha-L-arabinofuranoside residues in alpha-L-arabinosides.. It participates in glycan metabolism; L-arabinan degradation. Its function is as follows. Alpha-L-arabinofuranosidase involved in the degradation of arabinoxylan, a major component of plant hemicellulose. Acts only on small linear 1,5-alpha-linked L-arabinofuranosyl oligosaccharides. The polypeptide is Probable alpha-L-arabinofuranosidase A (abfA) (Aspergillus niger (strain ATCC MYA-4892 / CBS 513.88 / FGSC A1513)).